Reading from the N-terminus, the 90-residue chain is Bombyxin B-9 (90 aa).

Positions 1–20 are cleaved as a signal peptide; the sequence is MMKTAVMFILVVVISLTYSS. Disulfide bonds link Cys-30/Cys-75, Cys-42/Cys-88, and Cys-74/Cys-79. The propeptide at 49–64 is c peptide like; it reads GGAQYAPYWQETYLRS.

Belongs to the insulin family. As to quaternary structure, heterodimer of a B chain and an A chain linked by two disulfide bonds.

Its subcellular location is the secreted. Brain peptide responsible for activation of prothoracic glands to produce ecdysone in insects. The protein is Bombyxin B-9 (BBXB9) of Bombyx mori (Silk moth).